A 315-amino-acid chain; its full sequence is tRNA-dihydrouridine(16) synthase (315 aa).

FMN contacts are provided by residues 7–9 (PME) and Gln-68. The active-site Proton donor is Cys-98. FMN contacts are provided by residues Lys-139, 199 to 201 (NGE), and 223 to 224 (GR).

Belongs to the Dus family. DusC subfamily. FMN serves as cofactor.

It catalyses the reaction 5,6-dihydrouridine(16) in tRNA + NADP(+) = uridine(16) in tRNA + NADPH + H(+). The catalysed reaction is 5,6-dihydrouridine(16) in tRNA + NAD(+) = uridine(16) in tRNA + NADH + H(+). Catalyzes the synthesis of 5,6-dihydrouridine (D), a modified base found in the D-loop of most tRNAs, via the reduction of the C5-C6 double bond in target uridines. Specifically modifies U16 in tRNAs. The protein is tRNA-dihydrouridine(16) synthase of Aquipseudomonas alcaligenes (Pseudomonas alcaligenes).